Here is an 815-residue protein sequence, read N- to C-terminus: BTB/POZ domain-containing protein KCTD3 (815 aa).

Residues 18–87 (EIVQLNVGGT…LRTKELDLRG (70 aa)) enclose the BTB domain. Polar residues predominate over residues 139–168 (INNTVRSADSRNGLNSTEGEARGNGTQPVL). The disordered stretch occupies residues 139-170 (INNTVRSADSRNGLNSTEGEARGNGTQPVLSG). WD repeat units follow at residues 174 to 218 (ETVR…GWQQ), 224 to 263 (YLDWTIERVALNAKVVGGPHGDKDKMVAVASESSIILWSV), 270 to 305 (SEIGVFSLGVPVDALFFIGNQLVATSHTGKVGVWNA), 310 to 342 (WQVQDVVPITSYDTAGSFLLLGCNNGSIYYIDM), 354 to 404 (LLVT…VQHP), 412 to 449 (QLFQTFTVHRSPVTKIMLSEKHLVSVCADNNHVRTWTV), 457 to 504 (STQP…IQKV), and 510 to 569 (KLFV…MWDL). Residues 512–815 (FVRLSSTGKR…SDSSGQEYSL (304 aa)) form an interaction with HCN3 region. A phosphoserine mark is found at serine 604, serine 664, and serine 711. Positions 736-758 (SESKKRSSEDENENKIEFRKKGG) are enriched in basic and acidic residues. The interval 736–815 (SESKKRSSED…SDSSGQEYSL (80 aa)) is disordered. The segment covering 774-800 (ASSPSTSDGGTDSPGTASPSPTKTTPS) has biased composition (low complexity). Serine 793 carries the phosphoserine modification.

This sequence belongs to the KCTD3 family. As to quaternary structure, interacts with HCN3. Broadly expressed in normal tissues.

The protein localises to the cell membrane. Accessory subunit of potassium/sodium hyperpolarization-activated cyclic nucleotide-gated channel 3 (HCN3) up-regulating its cell-surface expression and current density without affecting its voltage dependence and kinetics. The chain is BTB/POZ domain-containing protein KCTD3 (KCTD3) from Homo sapiens (Human).